Consider the following 217-residue polypeptide: 3,4-dihydroxy-2-butanone 4-phosphate synthase (217 aa).

Residues 37-38, aspartate 42, 150-154, and glutamate 174 each bind D-ribulose 5-phosphate; these read RE and RRGHT. Glutamate 38 contacts Mg(2+). Residue histidine 153 coordinates Mg(2+).

This sequence belongs to the DHBP synthase family. In terms of assembly, homodimer. Mg(2+) is required as a cofactor. The cofactor is Mn(2+).

The catalysed reaction is D-ribulose 5-phosphate = (2S)-2-hydroxy-3-oxobutyl phosphate + formate + H(+). Its pathway is cofactor biosynthesis; riboflavin biosynthesis; 2-hydroxy-3-oxobutyl phosphate from D-ribulose 5-phosphate: step 1/1. Functionally, catalyzes the conversion of D-ribulose 5-phosphate to formate and 3,4-dihydroxy-2-butanone 4-phosphate. This chain is 3,4-dihydroxy-2-butanone 4-phosphate synthase, found in Shewanella baltica (strain OS155 / ATCC BAA-1091).